The following is a 304-amino-acid chain: Acetyl-coenzyme A carboxylase carboxyl transferase subunit beta (304 aa).

Residues 25 to 294 (VWTKCDSCGQ…PSVVESKADT (270 aa)) enclose the CoA carboxyltransferase N-terminal domain. Residues Cys29, Cys32, Cys48, and Cys51 each contribute to the Zn(2+) site. A C4-type zinc finger spans residues 29–51 (CDSCGQVLYRAELERNLEVCPKC).

This sequence belongs to the AccD/PCCB family. As to quaternary structure, acetyl-CoA carboxylase is a heterohexamer composed of biotin carboxyl carrier protein (AccB), biotin carboxylase (AccC) and two subunits each of ACCase subunit alpha (AccA) and ACCase subunit beta (AccD). Zn(2+) is required as a cofactor.

It is found in the cytoplasm. It carries out the reaction N(6)-carboxybiotinyl-L-lysyl-[protein] + acetyl-CoA = N(6)-biotinyl-L-lysyl-[protein] + malonyl-CoA. It functions in the pathway lipid metabolism; malonyl-CoA biosynthesis; malonyl-CoA from acetyl-CoA: step 1/1. Its function is as follows. Component of the acetyl coenzyme A carboxylase (ACC) complex. Biotin carboxylase (BC) catalyzes the carboxylation of biotin on its carrier protein (BCCP) and then the CO(2) group is transferred by the transcarboxylase to acetyl-CoA to form malonyl-CoA. This chain is Acetyl-coenzyme A carboxylase carboxyl transferase subunit beta, found in Yersinia pseudotuberculosis serotype O:1b (strain IP 31758).